We begin with the raw amino-acid sequence, 181 residues long: ATP-dependent protease subunit HslV (181 aa).

Threonine 7 is a catalytic residue. Na(+) contacts are provided by glycine 166, cysteine 169, and threonine 172.

This sequence belongs to the peptidase T1B family. HslV subfamily. A double ring-shaped homohexamer of HslV is capped on each side by a ring-shaped HslU homohexamer. The assembly of the HslU/HslV complex is dependent on binding of ATP.

Its subcellular location is the cytoplasm. It catalyses the reaction ATP-dependent cleavage of peptide bonds with broad specificity.. Its activity is regulated as follows. Allosterically activated by HslU binding. Its function is as follows. Protease subunit of a proteasome-like degradation complex believed to be a general protein degrading machinery. The sequence is that of ATP-dependent protease subunit HslV from Acidovorax ebreus (strain TPSY) (Diaphorobacter sp. (strain TPSY)).